Here is a 388-residue protein sequence, read N- to C-terminus: Chaperone protein DnaJ (388 aa).

In terms of domain architecture, J spans 5–69 (DYYDVLGVDK…QKKAQYDQFG (65 aa)). The CR-type zinc finger occupies 145–227 (GKKTDITYTR…CHGKGTIDKK (83 aa)). Positions 158, 161, 175, 178, 201, 204, 215, and 218 each coordinate Zn(2+). CXXCXGXG motif repeat units lie at residues 158–165 (CPTCDGSG), 175–182 (CDKCHGTG), 201–208 (CDKCGGRG), and 215–222 (CQTCHGKG).

It belongs to the DnaJ family. Homodimer. Zn(2+) is required as a cofactor.

It is found in the cytoplasm. Functionally, participates actively in the response to hyperosmotic and heat shock by preventing the aggregation of stress-denatured proteins and by disaggregating proteins, also in an autonomous, DnaK-independent fashion. Unfolded proteins bind initially to DnaJ; upon interaction with the DnaJ-bound protein, DnaK hydrolyzes its bound ATP, resulting in the formation of a stable complex. GrpE releases ADP from DnaK; ATP binding to DnaK triggers the release of the substrate protein, thus completing the reaction cycle. Several rounds of ATP-dependent interactions between DnaJ, DnaK and GrpE are required for fully efficient folding. Also involved, together with DnaK and GrpE, in the DNA replication of plasmids through activation of initiation proteins. This is Chaperone protein DnaJ from Lactobacillus gasseri (strain ATCC 33323 / DSM 20243 / BCRC 14619 / CIP 102991 / JCM 1131 / KCTC 3163 / NCIMB 11718 / NCTC 13722 / AM63).